A 407-amino-acid polypeptide reads, in one-letter code: BRCA1-A complex subunit Abraxas 1 (407 aa).

The MPN domain occupies 7–155 (LGVLSGFVLG…THCLEHALYK (149 aa)). Phosphoserine is present on Ser-48. Positions 209–259 (LKEVHKINEMYAAVQEELKSICQKVEQSEREVEKLLMDVNQLKEVRRTQQA) form a coiled coil. A disordered region spans residues 344 to 407 (KRKALDTHDQ…DADYPRSPTF (64 aa)). Basic and acidic residues predominate over residues 347–366 (ALDTHDQGSVKRPRLLETES). Residues Ser-384, Ser-385, Ser-394, and Ser-404 each carry the phosphoserine modification. A compositionally biased stretch (acidic residues) spans 388–399 (IDIEMGSPEDDA). The pSXXF motif signature appears at 404–407 (SPTF).

It belongs to the FAM175 family. Abraxas subfamily. In terms of assembly, component of the ARISC complex, at least composed of UIMC1/RAP80, ABRAXAS1, BRCC3/BRCC36, BABAM2 and BABAM1/NBA1. Component of the BRCA1-A complex, at least composed of the BRCA1, BARD1, UIMC1/RAP80, ABRAXAS1, BRCC3/BRCC36, BABAM2 and BABAM1/NBA1. In the complex, interacts directly with UIMC1/RAP80, BRCC3/BRCC36 and BABAM2. Homodimer. Interacts directly (when phosphorylated at Ser-404) with BRCA1. The phosphorylated homodimer can interact directly with two BRCA1 chains, giving rise to a heterotetramer. Binds polyubiquitin. Post-translationally, phosphorylation of Ser-404 of the pSXXF motif by ATM or ATR constitutes a specific recognition motif for the BRCT domain of BRCA1.

The protein resides in the nucleus. In terms of biological role, involved in DNA damage response and double-strand break (DSB) repair. Component of the BRCA1-A complex, acting as a central scaffold protein that assembles the various components of the complex and mediates the recruitment of BRCA1. The BRCA1-A complex specifically recognizes 'Lys-63'-linked ubiquitinated histones H2A and H2AX at DNA lesion sites, leading to target the BRCA1-BARD1 heterodimer to sites of DNA damage at DSBs. This complex also possesses deubiquitinase activity that specifically removes 'Lys-63'-linked ubiquitin on histones H2A and H2AX. This Mus musculus (Mouse) protein is BRCA1-A complex subunit Abraxas 1.